Here is a 490-residue protein sequence, read N- to C-terminus: Ketol-acid reductoisomerase (NADP(+)) (490 aa).

The region spanning 18 to 208 is the KARI N-terminal Rossmann domain; it reads AKCRFMDSSE…GGHKAGVLMS (191 aa). Residues 45–48, Arg-68, Arg-76, Ser-78, and 108–110 contribute to the NADP(+) site; these read CGAQ and DKQ. Residue His-132 is part of the active site. Gly-158 contributes to the NADP(+) binding site. 2 consecutive KARI C-terminal knotted domains span residues 209–344 and 345–486; these read SFIA…KTPA and GDVE…MADM. Residues Asp-217, Glu-221, Glu-389, and Glu-393 each coordinate Mg(2+). Ser-414 contributes to the substrate binding site.

It belongs to the ketol-acid reductoisomerase family. Mg(2+) serves as cofactor.

The catalysed reaction is (2R)-2,3-dihydroxy-3-methylbutanoate + NADP(+) = (2S)-2-acetolactate + NADPH + H(+). It carries out the reaction (2R,3R)-2,3-dihydroxy-3-methylpentanoate + NADP(+) = (S)-2-ethyl-2-hydroxy-3-oxobutanoate + NADPH + H(+). Its pathway is amino-acid biosynthesis; L-isoleucine biosynthesis; L-isoleucine from 2-oxobutanoate: step 2/4. It participates in amino-acid biosynthesis; L-valine biosynthesis; L-valine from pyruvate: step 2/4. Functionally, involved in the biosynthesis of branched-chain amino acids (BCAA). Catalyzes an alkyl-migration followed by a ketol-acid reduction of (S)-2-acetolactate (S2AL) to yield (R)-2,3-dihydroxy-isovalerate. In the isomerase reaction, S2AL is rearranged via a Mg-dependent methyl migration to produce 3-hydroxy-3-methyl-2-ketobutyrate (HMKB). In the reductase reaction, this 2-ketoacid undergoes a metal-dependent reduction by NADPH to yield (R)-2,3-dihydroxy-isovalerate. The protein is Ketol-acid reductoisomerase (NADP(+)) of Marinomonas sp. (strain MWYL1).